A 1270-amino-acid polypeptide reads, in one-letter code: DNA-directed RNA polymerase subunit beta (1270 aa).

It belongs to the RNA polymerase beta chain family. As to quaternary structure, the RNAP catalytic core consists of 2 alpha, 1 beta, 1 beta' and 1 omega subunit. When a sigma factor is associated with the core the holoenzyme is formed, which can initiate transcription.

The enzyme catalyses RNA(n) + a ribonucleoside 5'-triphosphate = RNA(n+1) + diphosphate. DNA-dependent RNA polymerase catalyzes the transcription of DNA into RNA using the four ribonucleoside triphosphates as substrates. In Phocaeicola vulgatus (strain ATCC 8482 / DSM 1447 / JCM 5826 / CCUG 4940 / NBRC 14291 / NCTC 11154) (Bacteroides vulgatus), this protein is DNA-directed RNA polymerase subunit beta.